Reading from the N-terminus, the 326-residue chain is Vomeronasal type-1 receptor 100 (326 aa).

Over 1-32 the chain is Extracellular; that stretch reads MSEFPFFSPQPLFSYMMNKNSRVHTDSNIRNT. Residues 33–53 traverse the membrane as a helical segment; sequence FFTEIGIGILANSFLLLFHIF. The Cytoplasmic portion of the chain corresponds to 54-70; that stretch reads KFIRGQRSRLTDLPIGL. Residues 71-91 form a helical membrane-spanning segment; it reads LSLIHLLMLLMGAFIAIDIFI. The Extracellular portion of the chain corresponds to 92-104; it reads SWRGWDDIICKFL. A disulfide bridge connects residues Cys-101 and Cys-188. The chain crosses the membrane as a helical span at residues 105-127; the sequence is VYLYRSFRGLSLCTTCMLSVLQA. At 128–149 the chain is on the cytoplasmic side; the sequence is ITLSPRSSCLAKFKHKSPHHVS. A helical membrane pass occupies residues 150–170; that stretch reads CAIISLSILYMFISSHLLVSI. Topologically, residues 171-209 are extracellular; sequence NATPNLTTNNFMQVTQSCYIIPLSYLMQSMFSTLLAIRD. N-linked (GlcNAc...) asparagine glycosylation occurs at Asn-175. A helical transmembrane segment spans residues 210 to 230; it reads ISLISLMVLSTCYMVVLLCRH. Residues 231 to 254 lie on the Cytoplasmic side of the membrane; it reads RNQIQHLQGTNLSPKASPEQRATQ. The helical transmembrane segment at 255–275 threads the bilayer; the sequence is TILMLMTFFVLMSIFDSIVSC. Topologically, residues 276-285 are extracellular; it reads SRTMYLNDPT. A helical transmembrane segment spans residues 286–306; that stretch reads SYYIQIFVVYIYATVSPFVFM. Topologically, residues 307-326 are cytoplasmic; it reads STEKHIVNFLKSMCVRVKNV.

It belongs to the G-protein coupled receptor 1 family. As to expression, expressed in 1-4% of neurons of the vomeronasal organ. Only one pheromone receptor gene may be expressed in a particular neuron. Not expressed in the main olfactory epithelium.

It localises to the cell membrane. In terms of biological role, putative pheromone receptor implicated in the regulation of social as well as reproductive behavior. The polypeptide is Vomeronasal type-1 receptor 100 (Vom1r100) (Rattus norvegicus (Rat)).